The chain runs to 143 residues: Nucleoside diphosphate kinase (143 aa).

Residues Lys11, Phe59, Arg87, Thr93, Arg104, and Asn114 each coordinate ATP. Catalysis depends on His117, which acts as the Pros-phosphohistidine intermediate.

Belongs to the NDK family. In terms of assembly, homotetramer. Requires Mg(2+) as cofactor.

Its subcellular location is the cytoplasm. The catalysed reaction is a 2'-deoxyribonucleoside 5'-diphosphate + ATP = a 2'-deoxyribonucleoside 5'-triphosphate + ADP. It catalyses the reaction a ribonucleoside 5'-diphosphate + ATP = a ribonucleoside 5'-triphosphate + ADP. Its function is as follows. Major role in the synthesis of nucleoside triphosphates other than ATP. The ATP gamma phosphate is transferred to the NDP beta phosphate via a ping-pong mechanism, using a phosphorylated active-site intermediate. The chain is Nucleoside diphosphate kinase from Shewanella loihica (strain ATCC BAA-1088 / PV-4).